The chain runs to 401 residues: Pectate lyase (401 aa).

The N-terminal stretch at 1–20 (MATTILPLILFISSLAIASS) is a signal peptide. N-linked (GlcNAc...) asparagine glycosylation is present at Asn38. Ca(2+) is bound by residues Asp199, Asp223, and Asp227. Arg279 is an active-site residue.

This sequence belongs to the polysaccharide lyase 1 family. The cofactor is Ca(2+). As to expression, expressed in sites of vascular differentiation and in new primordia on the flank of the shoot meristem.

It catalyses the reaction Eliminative cleavage of (1-&gt;4)-alpha-D-galacturonan to give oligosaccharides with 4-deoxy-alpha-D-galact-4-enuronosyl groups at their non-reducing ends.. Its pathway is glycan metabolism; pectin degradation; 2-dehydro-3-deoxy-D-gluconate from pectin: step 2/5. Involved in the degradation of pectin. May assist in the removal and modification of an existing pectin matrix in order to allow the deposition of newly synthesized walls polymers for a specialized function or to create an architecture that is extensible. This chain is Pectate lyase, found in Zinnia elegans (Garden zinnia).